A 145-amino-acid chain; its full sequence is MANNRLMPEGQIIEEDMDGEDQNARELDIDDDDDSELDDMRVMRLNNPQVAMLLDAPHEPPFNLHHMLGPVAMPTRPRNKRSFLTVAKPFHIQPQMCALVANGWQAVQHLQPEMRRDYFANYLYENMNSKNYPNGEGLPHHWGQF.

Residues 1–34 form a disordered region; sequence MANNRLMPEGQIIEEDMDGEDQNARELDIDDDDD. The span at 12–21 shows a compositional bias: acidic residues; that stretch reads IIEEDMDGED.

The protein belongs to the male-specific scotti family.

Post-meiotically transcribed gene that has a role in late spermiogenesis; required for actin cone progression during spermatid individualization. The polypeptide is Male-specific protein scotti (Drosophila willistoni (Fruit fly)).